A 432-amino-acid chain; its full sequence is MSVITDIHAREVLDSRGNPTVEAEVYTELGGFGRAIVPSGASTGEHEAVELRDGDKSRFGGQGVLTAVENVNGEIAKAVIGLDVTDQRLIDQTMIDLDGTPNKGRLGANAILSVSLASARAAADELGLPLYEYLGGPNAHVLPTPMMNVINGGKHADNNVDIQEFMIMPVGAKSLHEAVRMGAETFHTLKGLLQERGESTAVGDEGGFAPNLKNNEEPFEILVEAIQRAGYKPGQDIAIAFDCAASEFYNKDTKKYVTVADGREYTAEEWTSLIEDLVDKYPVISVEDPLDENDWEGWKTFTERLGDKVQIVGDDLFVTNTSYLEKGIKMGVANSILIKLNQIGTLTETFEAIEMAKEAGYTAVVSHRSGETEDTTIADLVVATNAGQIKTGSMSRTDRIAKYNQLMRIEEALGSTAQYKGIHSFYNLHKQF.

Glutamine 163 is a binding site for (2R)-2-phosphoglycerate. The Proton donor role is filled by glutamate 205. Mg(2+)-binding residues include aspartate 242, glutamate 287, and aspartate 314. Residues lysine 339, arginine 368, serine 369, and lysine 390 each coordinate (2R)-2-phosphoglycerate. The active-site Proton acceptor is lysine 339.

This sequence belongs to the enolase family. As to quaternary structure, homodimer. Probably forms octamers. Mg(2+) is required as a cofactor.

Its subcellular location is the cytoplasm. It is found in the secreted. The protein localises to the cell surface. It catalyses the reaction (2R)-2-phosphoglycerate = phosphoenolpyruvate + H2O. The protein operates within carbohydrate degradation; glycolysis; pyruvate from D-glyceraldehyde 3-phosphate: step 4/5. In terms of biological role, catalyzes the reversible conversion of 2-phosphoglycerate (2-PG) into phosphoenolpyruvate (PEP). It is essential for the degradation of carbohydrates via glycolysis. In Lactobacillus gasseri (strain ATCC 33323 / DSM 20243 / BCRC 14619 / CIP 102991 / JCM 1131 / KCTC 3163 / NCIMB 11718 / NCTC 13722 / AM63), this protein is Enolase 2.